An 85-amino-acid chain; its full sequence is Small ribosomal subunit protein bS16 (85 aa).

Belongs to the bacterial ribosomal protein bS16 family.

This Xanthomonas euvesicatoria pv. vesicatoria (strain 85-10) (Xanthomonas campestris pv. vesicatoria) protein is Small ribosomal subunit protein bS16.